Reading from the N-terminus, the 304-residue chain is Neurexophilin-4 (304 aa).

The first 23 residues, 1 to 23 (MRLLPEWLLLLFGPWLLRKVISG), serve as a signal peptide directing secretion. An II region spans residues 24–84 (QIVESGRPQY…GALARPGAAG (61 aa)). 4 N-linked (GlcNAc...) asparagine glycosylation sites follow: Asn-72, Asn-133, Asn-143, and Asn-149. The III stretch occupies residues 85–163 (GPPVPRTKRK…IVPPSKRVEF (79 aa)). The segment at 164 to 220 (GGVWLPGPAPHPLQSTLALEGVLPGLGPPLGMAGQGLGGNLGGALAGPLGGALGVPG) is IV (linker domain). The segment at 221-304 (AKESRAFNCH…NFQSEHPYFG (84 aa)) is v (Cys-rich).

Belongs to the neurexophilin family. May be proteolytically processed in neuron-like cells. In terms of tissue distribution, brain and kidney.

It localises to the secreted. May be signaling molecules that resemble neuropeptides and that act by binding to alpha-neurexins and possibly other receptors. The chain is Neurexophilin-4 (Nxph4) from Rattus norvegicus (Rat).